A 154-amino-acid chain; its full sequence is 6,7-dimethyl-8-ribityllumazine synthase (154 aa).

5-amino-6-(D-ribitylamino)uracil-binding positions include Phe22, 56-58, and 81-83; these read SFE and VLI. 86 to 87 is a (2S)-2-hydroxy-3-oxobutyl phosphate binding site; the sequence is ET. The active-site Proton donor is His89. Position 114 (Phe114) interacts with 5-amino-6-(D-ribitylamino)uracil. Arg128 contributes to the (2S)-2-hydroxy-3-oxobutyl phosphate binding site.

The protein belongs to the DMRL synthase family.

It carries out the reaction (2S)-2-hydroxy-3-oxobutyl phosphate + 5-amino-6-(D-ribitylamino)uracil = 6,7-dimethyl-8-(1-D-ribityl)lumazine + phosphate + 2 H2O + H(+). It functions in the pathway cofactor biosynthesis; riboflavin biosynthesis; riboflavin from 2-hydroxy-3-oxobutyl phosphate and 5-amino-6-(D-ribitylamino)uracil: step 1/2. Its function is as follows. Catalyzes the formation of 6,7-dimethyl-8-ribityllumazine by condensation of 5-amino-6-(D-ribitylamino)uracil with 3,4-dihydroxy-2-butanone 4-phosphate. This is the penultimate step in the biosynthesis of riboflavin. The polypeptide is 6,7-dimethyl-8-ribityllumazine synthase (Chlamydia caviae (strain ATCC VR-813 / DSM 19441 / 03DC25 / GPIC) (Chlamydophila caviae)).